Here is a 164-residue protein sequence, read N- to C-terminus: Transcription elongation factor GreA (164 aa).

Residues 50-76 (YHAAREEQGQQEARIRQLQELLNNAKV) adopt a coiled-coil conformation.

Belongs to the GreA/GreB family.

In terms of biological role, necessary for efficient RNA polymerase transcription elongation past template-encoded arresting sites. The arresting sites in DNA have the property of trapping a certain fraction of elongating RNA polymerases that pass through, resulting in locked ternary complexes. Cleavage of the nascent transcript by cleavage factors such as GreA or GreB allows the resumption of elongation from the new 3'terminus. GreA releases sequences of 2 to 3 nucleotides. The sequence is that of Transcription elongation factor GreA from Mycobacteroides abscessus (strain ATCC 19977 / DSM 44196 / CCUG 20993 / CIP 104536 / JCM 13569 / NCTC 13031 / TMC 1543 / L948) (Mycobacterium abscessus).